The sequence spans 339 residues: Cathepsin B (339 aa).

The signal sequence occupies residues M1 to A17. Positions H18–D79 are cleaved as a propeptide — activation peptide. Intrachain disulfides connect C93-C122, C105-C150, C141-C207, C142-C146, C179-C211, and C187-C198. Residue C108 is part of the active site. N-linked (GlcNAc...) asparagine glycosylation is present at N192. Position 220 is an N6-acetyllysine (K220). Residues H278 and N298 contribute to the active site. A propeptide spanning residues Q334–F339 is cleaved from the precursor.

This sequence belongs to the peptidase C1 family. In terms of assembly, dimer of a heavy chain and a light chain cross-linked by a disulfide bond. Interacts with SRPX2. Directly interacts with SHKBP1. Expressed in thyroid epithelial cells.

The protein localises to the lysosome. The protein resides in the melanosome. It localises to the secreted. Its subcellular location is the extracellular space. It is found in the apical cell membrane. The catalysed reaction is Hydrolysis of proteins with broad specificity for peptide bonds. Preferentially cleaves -Arg-Arg-|-Xaa bonds in small molecule substrates (thus differing from cathepsin L). In addition to being an endopeptidase, shows peptidyl-dipeptidase activity, liberating C-terminal dipeptides.. In terms of biological role, thiol protease which is believed to participate in intracellular degradation and turnover of proteins. Cleaves matrix extracellular phosphoglycoprotein MEPE. Involved in the solubilization of cross-linked TG/thyroglobulin in the thyroid follicle lumen. Has also been implicated in tumor invasion and metastasis. The sequence is that of Cathepsin B (Ctsb) from Mus musculus (Mouse).